Consider the following 199-residue polypeptide: LexA repressor (199 aa).

A DNA-binding region (H-T-H motif) is located at residues 28-47 (IRDIAKHFKLTPRGAHIHVI). Active-site for autocatalytic cleavage activity residues include Ser120 and Lys157.

This sequence belongs to the peptidase S24 family. As to quaternary structure, homodimer.

It catalyses the reaction Hydrolysis of Ala-|-Gly bond in repressor LexA.. In terms of biological role, represses a number of genes involved in the response to DNA damage (SOS response), including recA and lexA. In the presence of single-stranded DNA, RecA interacts with LexA causing an autocatalytic cleavage which disrupts the DNA-binding part of LexA, leading to derepression of the SOS regulon and eventually DNA repair. This is LexA repressor from Thermosipho melanesiensis (strain DSM 12029 / CIP 104789 / BI429).